The chain runs to 136 residues: Ribonuclease P protein component (136 aa).

The protein belongs to the RnpA family. Consists of a catalytic RNA component (M1 or rnpB) and a protein subunit.

It carries out the reaction Endonucleolytic cleavage of RNA, removing 5'-extranucleotides from tRNA precursor.. RNaseP catalyzes the removal of the 5'-leader sequence from pre-tRNA to produce the mature 5'-terminus. It can also cleave other RNA substrates such as 4.5S RNA. The protein component plays an auxiliary but essential role in vivo by binding to the 5'-leader sequence and broadening the substrate specificity of the ribozyme. This is Ribonuclease P protein component from Arthrobacter sp. (strain FB24).